The sequence spans 926 residues: Alpha-aminoadipic semialdehyde synthase, mitochondrial (926 aa).

The transit peptide at 1 to 27 (MLRAQRLRLARLRACVSRGLHHKPVMA) directs the protein to the mitochondrion. The interval 28–455 (LRREDVNAWE…DAVITSNGLL (428 aa)) is lysine-ketoglutarate reductase. An N6-acetyllysine mark is found at Lys-48, Lys-52, and Lys-56. Position 93 is an N6-acetyllysine; alternate (Lys-93). Lys-93 is modified (N6-succinyllysine; alternate). An N6-acetyllysine modification is found at Lys-128. An N6-acetyllysine; alternate modification is found at Lys-138. Lys-138 is modified (N6-succinyllysine; alternate). The residue at position 274 (Lys-274) is an N6-succinyllysine. Lys-286 bears the N6-acetyllysine; alternate mark. N6-succinyllysine; alternate is present on Lys-286. N6-succinyllysine is present on Lys-333. Residue Lys-458 is modified to N6-acetyllysine; alternate. An N6-succinyllysine; alternate modification is found at Lys-458. The saccharopine dehydrogenase stretch occupies residues 477–926 (MSTKKKVLVL…VFNTQSTIKL (450 aa)). Positions 488, 512, and 516 each coordinate NAD(+). Residues Lys-523 and Lys-535 each carry the N6-acetyllysine; alternate modification. N6-succinyllysine; alternate is present on residues Lys-523 and Lys-535. 3 residues coordinate NAD(+): Leu-554, Ala-576, and Ser-577. 577 to 578 (SY) contributes to the L-saccharopine binding site. Position 584 is an N6-acetyllysine; alternate (Lys-584). Lys-584 is subject to N6-succinyllysine; alternate. Leu-603, Asp-604, and Pro-605 together coordinate NAD(+). Asp-604 contributes to the L-saccharopine binding site. L-saccharopine is bound at residue Arg-703. N6-acetyllysine is present on Lys-707. Residue 724 to 726 (TLR) participates in L-saccharopine binding. Lys-732 bears the N6-succinyllysine mark. Residue Lys-739 is modified to N6-acetyllysine. Lys-761 carries the post-translational modification N6-acetyllysine; alternate. Lys-761 carries the N6-succinyllysine; alternate modification. N6-acetyllysine occurs at positions 778 and 780.

The protein in the N-terminal section; belongs to the AlaDH/PNT family. It in the C-terminal section; belongs to the saccharopine dehydrogenase family. As to quaternary structure, homotetramer.

The protein localises to the mitochondrion. The enzyme catalyses L-saccharopine + NADP(+) + H2O = L-lysine + 2-oxoglutarate + NADPH + H(+). It carries out the reaction L-saccharopine + NAD(+) + H2O = (S)-2-amino-6-oxohexanoate + L-glutamate + NADH + H(+). It functions in the pathway amino-acid degradation; L-lysine degradation via saccharopine pathway; glutaryl-CoA from L-lysine: step 1/6. The protein operates within amino-acid degradation; L-lysine degradation via saccharopine pathway; glutaryl-CoA from L-lysine: step 2/6. In terms of biological role, bifunctional enzyme that catalyzes the first two steps in lysine degradation. The chain is Alpha-aminoadipic semialdehyde synthase, mitochondrial from Rattus norvegicus (Rat).